Consider the following 189-residue polypeptide: GTP cyclohydrolase 1 (189 aa).

Residues Cys-76, His-79, and Cys-149 each contribute to the Zn(2+) site.

Belongs to the GTP cyclohydrolase I family. As to quaternary structure, toroid-shaped homodecamer, composed of two pentamers of five dimers.

It catalyses the reaction GTP + H2O = 7,8-dihydroneopterin 3'-triphosphate + formate + H(+). It participates in cofactor biosynthesis; 7,8-dihydroneopterin triphosphate biosynthesis; 7,8-dihydroneopterin triphosphate from GTP: step 1/1. In Dehalococcoides mccartyi (strain ATCC BAA-2266 / KCTC 15142 / 195) (Dehalococcoides ethenogenes (strain 195)), this protein is GTP cyclohydrolase 1.